A 204-amino-acid chain; its full sequence is Peptide deformylase (204 aa).

Fe cation-binding residues include cysteine 131 and histidine 174. Residue glutamate 175 is part of the active site. Histidine 178 provides a ligand contact to Fe cation.

The protein belongs to the polypeptide deformylase family. Fe(2+) is required as a cofactor.

It carries out the reaction N-terminal N-formyl-L-methionyl-[peptide] + H2O = N-terminal L-methionyl-[peptide] + formate. Functionally, removes the formyl group from the N-terminal Met of newly synthesized proteins. Requires at least a dipeptide for an efficient rate of reaction. N-terminal L-methionine is a prerequisite for activity but the enzyme has broad specificity at other positions. In Streptococcus equi subsp. zooepidemicus (strain MGCS10565), this protein is Peptide deformylase.